A 352-amino-acid polypeptide reads, in one-letter code: Probable protein phosphatase 2C 42 (352 aa).

The PPM-type phosphatase domain occupies 26-321; it reads AYASSAMQGY…DNMSVILVRF (296 aa). Mn(2+) is bound by residues aspartate 62, glycine 63, aspartate 267, and aspartate 312. The tract at residues 328-352 is disordered; sequence RGARAATSSTSTGTVPSRHSKSISL. The segment covering 329 to 341 has biased composition (low complexity); the sequence is GARAATSSTSTGT.

The protein belongs to the PP2C family. Mg(2+) is required as a cofactor. The cofactor is Mn(2+).

The enzyme catalyses O-phospho-L-seryl-[protein] + H2O = L-seryl-[protein] + phosphate. It carries out the reaction O-phospho-L-threonyl-[protein] + H2O = L-threonyl-[protein] + phosphate. The polypeptide is Probable protein phosphatase 2C 42 (Oryza sativa subsp. japonica (Rice)).